We begin with the raw amino-acid sequence, 258 residues long: 5'-nucleotidase SurE (258 aa).

Residues aspartate 18, aspartate 19, serine 49, and asparagine 102 each coordinate a divalent metal cation.

The protein belongs to the SurE nucleotidase family. A divalent metal cation serves as cofactor.

Its subcellular location is the cytoplasm. It catalyses the reaction a ribonucleoside 5'-phosphate + H2O = a ribonucleoside + phosphate. In terms of biological role, nucleotidase that shows phosphatase activity on nucleoside 5'-monophosphates. This is 5'-nucleotidase SurE from Vibrio campbellii (strain ATCC BAA-1116).